The following is a 405-amino-acid chain: uncharacterized protein (405 aa).

A signal peptide spans 1–34; that stretch reads MNKFLKYFLILLALVLIVVPIVFATLLFKTSQDA. Over residues 348–359 the composition is skewed to basic and acidic residues; the sequence is EQNDTTDKDKTS. The disordered stretch occupies residues 348–405; sequence EQNDTTDKDKTSNENSDSTNNSDSSNQQQPATDQNSNQNQGGTQQAPQASNNQNGVVN. Low complexity-rich tracts occupy residues 360–373 and 381–392; these read NENSDSTNNSDSSN and QNSNQNQGGTQQ. Polar residues predominate over residues 393-405; it reads APQASNNQNGVVN.

Belongs to the LytR/CpsA/Psr (LCP) family.

This is an uncharacterized protein from Staphylococcus aureus (strain NCTC 8325 / PS 47).